The chain runs to 1525 residues: Multidrug resistance protein mrp-7 (1525 aa).

The Extracellular segment spans residues 1-24; the sequence is MLSSFCGDGHPFSTGLPNVSICAQ. Asn18 is a glycosylation site (N-linked (GlcNAc...) asparagine). A helical transmembrane segment spans residues 25 to 45; the sequence is HTVLVWVPAAFFLLTLPFLSA. Topologically, residues 46–66 are cytoplasmic; it reads QCHLTAQRFARLPFSAHFIIK. Residues 67–87 form a helical membrane-spanning segment; that stretch reads LLLVAFLAANSLATWCYVLFS. Over 88-94 the chain is Extracellular; the sequence is KNSYAAA. A helical transmembrane segment spans residues 95–115; that stretch reads YYVYPGLWVLVWTGTFLVHLI. Over 116–118 the chain is Cytoplasmic; the sequence is RLR. A helical transmembrane segment spans residues 119 to 139; sequence CGLVSSGIQHVTSLIFLLCGA. Residues 140–165 are Extracellular-facing; the sequence is PEFYQWIRMENSNSFPNDLTTTDSAQ. The helical transmembrane segment at 166 to 186 threads the bilayer; sequence FLSIAYLSWYSALILYTFSLC. Residues 187 to 346 lie on the Cytoplasmic side of the membrane; it reads FADPRGAKTD…APFWKGMALS (160 aa). An ABC transmembrane type-1 1 domain is found at 305–587; that stretch reads LLASTLKFVS…IALLINQAVQ (283 aa). Residues 347-367 form a helical membrane-spanning segment; the sequence is ILMFSVSELRSLILNGYFYIM. Residues 368 to 434 lie on the Extracellular side of the membrane; the sequence is FRMGTKIQTS…SCPYQITFAL (67 aa). The helical transmembrane segment at 435–455 threads the bilayer; it reads VYLFITLGYSALPGVVIMVIF. Residues 456–535 are Cytoplasmic-facing; the sequence is VPMNIISSMI…NILDSFNTAS (80 aa). Residues 536 to 556 traverse the membrane as a helical segment; it reads PFLVALFSFGTFVLSNPSHLL. The Extracellular portion of the chain corresponds to 557–561; sequence TPQIA. A helical transmembrane segment spans residues 562–582; that stretch reads FVSLALFNQLRSPMTMIALLI. Residues 583–953 lie on the Cytoplasmic side of the membrane; that stretch reads NQAVQAVVSN…ATYQLYVKAA (371 aa). In terms of domain architecture, ABC transporter 1 spans 622–849; sequence VRVENLTASW…RGLFFDFMEE (228 aa). ATP is bound at residue 659-666; that stretch reads GKVGSGKS. Positions 900–925 are disordered; it reads ELTTQISTMSSPEKPPTGTSPAAATE. The chain crosses the membrane as a helical span at residues 954–974; it reads GYLLSIAFIGFFIVYMTLQIL. The 287-residue stretch at 959–1245 folds into the ABC transmembrane type-1 2 domain; it reads IAFIGFFIVY…AVRQVSEIEA (287 aa). At 975–1005 the chain is on the extracellular side; the sequence is RSFWLSAWSDEYDPDSPSAHPMAKGWRLGVY. The chain crosses the membrane as a helical span at residues 1006 to 1026; the sequence is GALGFSETACFFVALLALVFV. The Cytoplasmic portion of the chain corresponds to 1027–1068; that stretch reads GQRASKNLHGPLIHNLMRSPMSFYDTTPLGRILNRCAKDIET. A helical membrane pass occupies residues 1069-1089; the sequence is IDMMLPMNFRYLVMCVLQVAF. Position 1090 (Thr1090) is a topological domain, extracellular. Residues 1091-1111 traverse the membrane as a helical segment; that stretch reads LIVIIISTPLFAVVILPLALI. Topologically, residues 1112-1184 are cytoplasmic; it reads YLIFLRYYVP…RYSSLVSNRW (73 aa). A helical membrane pass occupies residues 1185-1205; the sequence is LAVRLEFVGNCIIFFAALFAV. Residues 1206 to 1525 lie on the Extracellular side of the membrane; it reads LSKEFGWITS…ADAAEQDKHE (320 aa). N-linked (GlcNAc...) asparagine glycosylation occurs at Asn1228. Positions 1282–1516 constitute an ABC transporter 2 domain; it reads VKFDGYSTRY…KNSAFAKMVA (235 aa). Position 1316–1323 (1316–1323) interacts with ATP; sequence GRTGAGKS. N-linked (GlcNAc...) asparagine glycans are attached at residues Asn1358 and Asn1418.

This sequence belongs to the ABC transporter superfamily. ABCC family. Conjugate transporter (TC 3.A.1.208) subfamily. Expressed in head neurons, including the dopamine (DA) motor neuron, and other cells in the body.

It is found in the cell membrane. In terms of biological role, negatively regulates cellular toxicity by mediating the export of environmental toxicants such as methylmercury out of the cell. Plays a role in inhibiting methylmercury-induced dopamine (DA) motor neuron degeneration. Not involved in Mn(2+)- or Al(3+)-associated toxicity. The chain is Multidrug resistance protein mrp-7 from Caenorhabditis elegans.